An 86-amino-acid chain; its full sequence is YcgL domain-containing protein XAC4085 (86 aa).

In terms of domain architecture, YcgL spans 1–83 (MHAYVYKSQR…PKTIVLAGEC (83 aa)).

The polypeptide is YcgL domain-containing protein XAC4085 (Xanthomonas axonopodis pv. citri (strain 306)).